The primary structure comprises 586 residues: Glutamine--tRNA ligase (586 aa).

A 'HIGH' region motif is present at residues 58-68 (PEPNGYLHIGH). ATP is bound by residues 59–61 (EPN) and 65–71 (HIGHAKS). Positions 91 and 240 each coordinate L-glutamine. ATP-binding positions include T259 and 294 to 295 (RL). The 'KMSKS' region motif lies at 301-305 (VTSKR).

The protein belongs to the class-I aminoacyl-tRNA synthetase family. As to quaternary structure, monomer.

The protein resides in the cytoplasm. The catalysed reaction is tRNA(Gln) + L-glutamine + ATP = L-glutaminyl-tRNA(Gln) + AMP + diphosphate. The polypeptide is Glutamine--tRNA ligase (Bordetella avium (strain 197N)).